Reading from the N-terminus, the 318-residue chain is ATP phosphoribosyltransferase regulatory subunit (318 aa).

It belongs to the class-II aminoacyl-tRNA synthetase family. HisZ subfamily. Heteromultimer composed of HisG and HisZ subunits.

It localises to the cytoplasm. It functions in the pathway amino-acid biosynthesis; L-histidine biosynthesis; L-histidine from 5-phospho-alpha-D-ribose 1-diphosphate: step 1/9. Its function is as follows. Required for the first step of histidine biosynthesis. May allow the feedback regulation of ATP phosphoribosyltransferase activity by histidine. This chain is ATP phosphoribosyltransferase regulatory subunit, found in Lactococcus lactis subsp. cremoris (strain MG1363).